The sequence spans 427 residues: Trigger factor (427 aa).

One can recognise a PPIase FKBP-type domain in the interval 163-248; sequence GDTVVIDFVG…IHEVKAKEVP (86 aa).

It belongs to the FKBP-type PPIase family. Tig subfamily.

Its subcellular location is the cytoplasm. The enzyme catalyses [protein]-peptidylproline (omega=180) = [protein]-peptidylproline (omega=0). Involved in protein export. Acts as a chaperone by maintaining the newly synthesized protein in an open conformation. Functions as a peptidyl-prolyl cis-trans isomerase. In Streptococcus pneumoniae (strain Taiwan19F-14), this protein is Trigger factor.